The sequence spans 434 residues: Alpha-enolase (434 aa).

Position 2 is an N-acetylserine (serine 2). Lysine 5 is subject to N6-acetyllysine. Serine 27 is subject to Phosphoserine. The epitope recognized by CAR and healthy patient antibodies stretch occupies residues 31–38; the sequence is FRAAVPSG. Position 40 (serine 40) interacts with Mg(2+). Tyrosine 44 is modified (phosphotyrosine). Positions 56-63 are epitope recognized by CAR antibodies; the sequence is RYMGKGVS. Lysine 60 bears the N6-acetyllysine; alternate mark. Lysine 60 carries the post-translational modification N6-succinyllysine; alternate. Lysine 64 and lysine 71 each carry N6-acetyllysine. Lysine 89 carries the N6-acetyllysine; alternate modification. Residue lysine 89 is modified to N6-succinyllysine; alternate. Residues lysine 92 and lysine 126 each carry the N6-acetyllysine modification. Positions 97–237 are required for repression of c-myc promoter activity; it reads MDGTENKSKF…KTAIGKAGYT (141 aa). Substrate is bound by residues histidine 158 and glutamate 167. Residues lysine 193 and lysine 199 each carry the N6-acetyllysine modification. An N6-acetyllysine; alternate modification is found at lysine 202. A Glycyl lysine isopeptide (Lys-Gly) (interchain with G-Cter in SUMO2); alternate cross-link involves residue lysine 202. The active-site Proton donor is glutamate 210. Residues lysine 228 and lysine 233 each carry the N6-acetyllysine; alternate modification. Lysine 228 carries the post-translational modification N6-succinyllysine; alternate. At lysine 228 the chain carries N6-(2-hydroxyisobutyryl)lysine; alternate. N6-malonyllysine; alternate is present on lysine 233. A Mg(2+)-binding site is contributed by aspartate 245. Serine 254 is modified (phosphoserine). Lysine 256 bears the N6-acetyllysine mark. Phosphoserine occurs at positions 263 and 272. Residue lysine 281 is modified to N6-acetyllysine; alternate. Lysine 281 is modified (N6-(2-hydroxyisobutyryl)lysine; alternate). Lysine 285 bears the N6-acetyllysine mark. Phosphotyrosine is present on tyrosine 287. Serine 291 carries the post-translational modification Phosphoserine. The Mg(2+) site is built by glutamate 293 and aspartate 318. 2 residues coordinate substrate: glutamate 293 and aspartate 318. 2 positions are modified to N6-acetyllysine: lysine 335 and lysine 343. The Proton acceptor role is filled by lysine 343. Substrate is bound by residues 370–373 and lysine 394; that span reads SHRS. Positions 405–434 are required for interaction with PLG; sequence AKYNQLLRIEEELGSKAKFAGRNFRNPLAK. Lysine 406 bears the N6-acetyllysine mark. The residue at position 420 (lysine 420) is an N6-acetyllysine; alternate. An N6-succinyllysine; alternate modification is found at lysine 420. Lysine 420 bears the N6-malonyllysine; alternate mark.

It belongs to the enolase family. Mammalian enolase is composed of 3 isozyme subunits, alpha, beta and gamma, which can form homodimers or heterodimers which are cell-type and development-specific. ENO1 interacts with PLG in the neuronal plasma membrane and promotes its activation. The C-terminal lysine is required for this binding. Isoform MBP-1 interacts with TRAPPC2B. Interacts with ENO4 and PGAM2. Interacts with CMTM6. It depends on Mg(2+) as a cofactor. Post-translationally, ISGylated. Lysine 2-hydroxyisobutyrylation (Khib) by p300/EP300 activates the phosphopyruvate hydratase activity. The alpha/alpha homodimer is expressed in embryo and in most adult tissues. The alpha/beta heterodimer and the beta/beta homodimer are found in striated muscle, and the alpha/gamma heterodimer and the gamma/gamma homodimer in neurons.

The protein resides in the cytoplasm. Its subcellular location is the cell membrane. It is found in the myofibril. The protein localises to the sarcomere. It localises to the m line. The protein resides in the nucleus. It catalyses the reaction (2R)-2-phosphoglycerate = phosphoenolpyruvate + H2O. The protein operates within carbohydrate degradation; glycolysis; pyruvate from D-glyceraldehyde 3-phosphate: step 4/5. Glycolytic enzyme the catalyzes the conversion of 2-phosphoglycerate to phosphoenolpyruvate. In addition to glycolysis, involved in various processes such as growth control, hypoxia tolerance and allergic responses. May also function in the intravascular and pericellular fibrinolytic system due to its ability to serve as a receptor and activator of plasminogen on the cell surface of several cell-types such as leukocytes and neurons. Stimulates immunoglobulin production. In terms of biological role, binds to the myc promoter and acts as a transcriptional repressor. May be a tumor suppressor. This chain is Alpha-enolase (ENO1), found in Homo sapiens (Human).